Consider the following 289-residue polypeptide: Serine/threonine-protein phosphatase Pgam5, mitochondrial (289 aa).

It belongs to the phosphoglycerate mutase family. BPG-dependent PGAM subfamily. Interacts with Pk92B/ASK1.

It is found in the mitochondrion outer membrane. The catalysed reaction is O-phospho-L-seryl-[protein] + H2O = L-seryl-[protein] + phosphate. It catalyses the reaction O-phospho-L-threonyl-[protein] + H2O = L-threonyl-[protein] + phosphate. Functionally, displays phosphatase activity for serine/threonine residues, and dephosphorylates and activates Pk92B kinase. Has apparently no phosphoglycerate mutase activity. This Drosophila mojavensis (Fruit fly) protein is Serine/threonine-protein phosphatase Pgam5, mitochondrial.